We begin with the raw amino-acid sequence, 503 residues long: Hexose transporter 1 (503 aa).

Topologically, residues 1–26 are cytoplasmic; sequence MKKSSKEISPSQSLKNGGSDHFFNTS. The helical transmembrane segment at 27–47 threads the bilayer; it reads LMYVLAACLASFIFGYQVSVL. At 48–76 the chain is on the extracellular side; sequence NTIKNFIVIEFGWCTGNKVECDDSTLKSS. The cysteines at positions 61 and 68 are disulfide-linked. The helical transmembrane segment at 77 to 97 threads the bilayer; the sequence is FLLASVFIGAVVGSGFSDYLV. The Cytoplasmic portion of the chain corresponds to 98-102; it reads QHGRR. Residues 103 to 123 form a helical membrane-spanning segment; it reads FSLLVIYNFFILVSILTSITH. The Extracellular segment spans residues 124–132; the sequence is HFHTILFSR. A helical transmembrane segment spans residues 133–153; the sequence is LLSGFGVGLITVSVPMYISEM. Topologically, residues 154–163 are cytoplasmic; it reads THKDKKGAYG. The helical transmembrane segment at 164–184 threads the bilayer; that stretch reads VLHQLFITFGILVAVLLGMAM. Gln-167 is an alpha-D-glucose binding site. Gln-167 lines the beta-D-glucose pocket. Residues 185–205 lie on the Extracellular side of the membrane; the sequence is GEAPDAKSVDALGEFQKIWWR. The chain crosses the membrane as a helical span at residues 206 to 226; the sequence is LMFFFPCLISILGIVLLTFFY. The Cytoplasmic segment spans residues 227 to 291; it reads KEETPYYLFE…RAMQIPSYRN (65 aa). The helical transmembrane segment at 292–312 threads the bilayer; sequence VILLGCILSGLQQFTGINVLV. Alpha-D-glucose-binding residues include Gln-303, Gln-304, and Asn-309. Gln-303 contacts beta-D-glucose. Asn-309 contributes to the beta-D-glucose binding site. Over 313–329 the chain is Extracellular; it reads SNSNELYKEFLSNKLIT. Residues 330-350 traverse the membrane as a helical segment; sequence TLSVIMTVVNFLMTFPAIYIV. Residue Asn-339 coordinates beta-D-glucose. At 351-356 the chain is on the cytoplasmic side; the sequence is EKLGRK. The chain crosses the membrane as a helical span at residues 357–377; sequence TLLLCGCAGVTLAAFLPTAIA. Residues 378–391 are Extracellular-facing; it reads NQIDRSSDLVRNLS. The helical transmembrane segment at 392 to 412 threads the bilayer; sequence IAATFVMIISFAVSYGPVLWI. Trp-411 serves as a coordination point for alpha-D-glucose. Topologically, residues 413–428 are cytoplasmic; sequence YLHEMFPSEIKDSAAS. Residues 429 to 449 traverse the membrane as a helical segment; that stretch reads LASLVNWVCAIIVVFPSDIII. The Extracellular segment spans residues 450 to 454; it reads KKSPT. The chain crosses the membrane as a helical span at residues 455-475; sequence ILFFIFSGMSILSFLFIFFFI. The Cytoplasmic segment spans residues 476 to 503; sequence KETKGGEIGTSPYITMEERQKHMGKSAV.

This sequence belongs to the major facilitator superfamily. Sugar transporter (TC 2.A.1.1) family. As to quaternary structure, homodimer.

It localises to the cell membrane. The enzyme catalyses D-glucose(out) = D-glucose(in). It carries out the reaction D-fructose(out) = D-fructose(in). The catalysed reaction is D-galactose(in) = D-galactose(out). It catalyses the reaction D-mannose(out) = D-mannose(in). The enzyme catalyses D-glucosamine(out) = D-glucosamine(in). It carries out the reaction D-xylose(out) = D-xylose(in). Its activity is regulated as follows. Inhibited by compound 3361 (3-O-((undec-10-en)-1-yl)-D-glucose). Sodium-independent facilitative hexose transporter. Can transport D-glucose and D-fructose. Can transport D-mannose, D-galactose, D-xylose and D-glucosamine. This Plasmodium vivax protein is Hexose transporter 1.